Consider the following 208-residue polypeptide: Hemocyanin, units E and F (208 aa).

Histidine 1 contacts Cu cation. Positions 1–74 (HGLPAQCPNA…HDLESVRGNL (74 aa)) are unit E. The cysteines at positions 7 and 18 are disulfide-linked. Positions 19 to 21 (CLH) form a cross-link, 2'-(S-cysteinyl)-histidine (Cys-His). Asparagine 43 carries N-linked (GlcNAc...) asparagine glycosylation. A unit F region spans residues 75 to 208 (VRKNVDRLSL…GHLSLLSPET (134 aa)). Histidine 113 contributes to the Cu cation binding site. Residues cysteine 119 and cysteine 130 are joined by a disulfide bond. Residues 131 to 133 (CLH) constitute a cross-link (2'-(S-cysteinyl)-histidine (Cys-His)). Cu cation is bound by residues histidine 133 and histidine 142.

This sequence belongs to the tyrosinase family. Hemocyanin subfamily. As to quaternary structure, decamers of large identical subunits (390 kDa), each containing 8 globular oxygen-binding functional units. Cu(2+) serves as cofactor.

Functionally, hemocyanins are copper-containing oxygen carriers occurring freely dissolved in the hemolymph of many mollusks and arthropods. In Sepia officinalis (Common cuttlefish), this protein is Hemocyanin, units E and F.